We begin with the raw amino-acid sequence, 284 residues long: NADH-cytochrome b5 reductase 1 (284 aa).

A helical transmembrane segment spans residues 7–27; sequence KLVVVIVIVVVPLLFKFIIGP. The region spanning 38–142 is the FAD-binding FR-type domain; sequence NDFQSFPLVE…KGPRGNYHYE (105 aa). 148–180 contacts FAD; sequence HLGMIAGGTGIAPMYQIMKAIAMDSHDTTKVSL.

Belongs to the flavoprotein pyridine nucleotide cytochrome reductase family. Monomer. Component of the 2-(3-amino-3-carboxypropyl)histidine synthase complex composed of DPH1, DPH2, KTI11/DPH3 and a NADH-dependent reductase, predominantly CBR1. Interacts with KTI11/DPH3. Interacts with STE20. It depends on FAD as a cofactor.

It localises to the mitochondrion outer membrane. The catalysed reaction is 2 Fe(III)-[cytochrome b5] + NADH = 2 Fe(II)-[cytochrome b5] + NAD(+) + H(+). It catalyses the reaction 2 Fe(3+)-[Dph3] + NADH = 2 Fe(2+)-[Dph3] + NAD(+) + H(+). It functions in the pathway protein modification; peptidyl-diphthamide biosynthesis. Its activity is regulated as follows. Competitively inhibited by NAD(+). Inhibited by mercurials such as p-chloromercuribenzoate (PCMB) and HgCl(2). Enzymatic activity increases under anaerobic conditions. Functionally, NADH-dependent reductase for KTI11/DPH3 and cytochrome b5. Required for the first step of diphthamide biosynthesis, a post-translational modification of histidine which occurs in elongation factor 2. DPH1 and DPH2 transfer a 3-amino-3-carboxypropyl (ACP) group from S-adenosyl-L-methionine (SAM) to a histidine residue, the reaction is assisted by a reduction system comprising KTI11/DPH3 and a NADH-dependent reductase, predominantly CBR1. By reducing KTI11/DPH3, also involved in the formation of the tRNA wobble base modification mcm5s 2U (5-methoxycarbonylmethyl-2-thiouridine), mediated by the elongator complex. The cytochrome b5/NADH cytochrome b5 reductase electron transfer system supports the catalytic activity of several sterol biosynthetic enzymes. Plays a role in bud morphology. The polypeptide is NADH-cytochrome b5 reductase 1 (CBR1) (Saccharomyces cerevisiae (strain YJM789) (Baker's yeast)).